Consider the following 260-residue polypeptide: Global transcriptional regulator CodY (260 aa).

The tract at residues 1-159 (MPNLLEKTRK…SSTVVGIQLL (159 aa)) is GAF domain. Residues 207–226 (ASVIADRIGITRSVIVNALR) constitute a DNA-binding region (H-T-H motif).

Belongs to the CodY family.

The protein resides in the cytoplasm. In terms of biological role, DNA-binding global transcriptional regulator which is involved in the adaptive response to starvation and acts by directly or indirectly controlling the expression of numerous genes in response to nutrient availability. During rapid exponential growth, CodY is highly active and represses genes whose products allow adaptation to nutrient depletion. This is Global transcriptional regulator CodY from Streptococcus pyogenes serotype M4 (strain MGAS10750).